Reading from the N-terminus, the 582-residue chain is Zinc finger protein 614 (582 aa).

The KRAB domain occupies Leu8–Pro79. The C2H2-type 1 zinc-finger motif lies at His202–His224. Residues Lys254–His278 form a C2H2-type 2; degenerate zinc finger. 10 consecutive C2H2-type zinc fingers follow at residues Tyr284–His306, Tyr312–His334, Tyr340–His362, Tyr368–His390, Tyr396–His418, Tyr424–His446, Tyr452–His474, Phe480–His502, Tyr508–His530, and Tyr536–His558.

The protein belongs to the krueppel C2H2-type zinc-finger protein family.

The protein resides in the nucleus. Functionally, may be involved in transcriptional regulation. The polypeptide is Zinc finger protein 614 (ZNF614) (Macaca fascicularis (Crab-eating macaque)).